The primary structure comprises 146 residues: Hemoglobin subunit beta-1/2 (146 aa).

The region spanning 2–146 is the Globin domain; the sequence is EWTDKERSII…VVSALGKQYH (145 aa). The heme b site is built by His-63 and His-92.

This sequence belongs to the globin family. Hb1 is a heterotetramer of two alpha-1 chains and two beta chains. Hb2 is a heterotetramer of two alpha-2 chains and two beta chains. Red blood cells.

In terms of biological role, involved in oxygen transport from gills to the various peripheral tissues. In Trematomus newnesi (Dusky notothen), this protein is Hemoglobin subunit beta-1/2.